The primary structure comprises 72 residues: Gas vesicle protein A (72 aa).

This sequence belongs to the gas vesicle GvpA family. The gas vesicle shell is 2 nm thick and consists of a single layer of this protein. It forms helical ribs nearly perpendicular to the long axis of the vesicle.

The protein localises to the gas vesicle shell. In terms of biological role, gas vesicles are hollow, gas filled proteinaceous nanostructures found in some microorganisms. During planktonic growth they allow positioning of the organism at a favorable depth for light or nutrient acquisition. GvpA forms the protein shell. The sequence is that of Gas vesicle protein A from Pseudanabaena galeata (strain PCC 6901).